The following is a 102-amino-acid chain: Small ribosomal subunit protein uS10 (102 aa).

This sequence belongs to the universal ribosomal protein uS10 family. Part of the 30S ribosomal subunit.

Functionally, involved in the binding of tRNA to the ribosomes. The protein is Small ribosomal subunit protein uS10 of Streptococcus pyogenes serotype M12 (strain MGAS2096).